A 194-amino-acid polypeptide reads, in one-letter code: Lymphocyte antigen 6 complex locus protein G5b (194 aa).

The first 18 residues, 1–18, serve as a signal peptide directing secretion; that stretch reads MRARVLVGMLTMVGFAMG. In terms of domain architecture, UPAR/Ly6 spans 26–118; the sequence is RTCHLCLLED…SAQHQSTLRG (93 aa). 5 disulfides stabilise this stretch: cysteine 28/cysteine 55, cysteine 31/cysteine 40, cysteine 47/cysteine 73, cysteine 81/cysteine 98, and cysteine 99/cysteine 104. Asparagine 63 carries an N-linked (GlcNAc...) asparagine glycan. A glycan (N-linked (GlcNAc...) asparagine) is linked at asparagine 141.

Monomer. In terms of processing, N-glycosylated.

The protein localises to the secreted. In Mus musculus (Mouse), this protein is Lymphocyte antigen 6 complex locus protein G5b (Ly6g5b).